Reading from the N-terminus, the 840-residue chain is N-acetyltransferase ESCO1 (840 aa).

Positions 1–25 (MMSIQEKSKENSSKVTKKSDDKNSE) are enriched in basic and acidic residues. Residues 1 to 188 (MMSIQEKSKE…VLEVKSDSKE (188 aa)) are disordered. 3 stretches are compositionally biased toward polar residues: residues 46–58 (KSQAKSSSESKIN), 65–74 (RMSTRSSKAA), and 81–96 (KSINKNTVTVRGYSQE). Basic and acidic residues predominate over residues 131–140 (VSRRSLRSRE). Residues 141-153 (IQGQVQAVKQSLP) show a composition bias toward polar residues. Residues 161 to 170 (SSTQSKSNKT) are compositionally biased toward low complexity. Basic and acidic residues predominate over residues 178–188 (KVLEVKSDSKE). Ser-200 is modified (phosphoserine). Disordered regions lie at residues 221–300 (TQGS…KSKR) and 318–338 (NVEVKKESSQMESVKEEKPTE). A compositionally biased stretch (polar residues) spans 267-278 (HTQVNTNTTLPK). Residues 319–338 (VEVKKESSQMESVKEEKPTE) are compositionally biased toward basic and acidic residues. Lys-332 participates in a covalent cross-link: Glycyl lysine isopeptide (Lys-Gly) (interchain with G-Cter in SUMO2). Residue Ser-412 is modified to Phosphoserine. 2 disordered regions span residues 486–505 (ANEIKPSDPPLDNQMKHSFD) and 542–582 (TGEN…KCNS). A compositionally biased stretch (polar residues) spans 551–565 (APQQHSILSNQTSKS). The CCHH-type zinc finger occupies 617–641 (VSCNVCGMLYTASNPEDETQHLLFH). Acetyl-CoA-binding positions include 772 to 774 (IWV), 780 to 785 (RKKIAS), and 812 to 814 (TPD).

Belongs to the acetyltransferase family. ECO subfamily. As to quaternary structure, the subunit structure is controversial. Monomer. Homodimer. Post-translationally, phosphorylated during mitosis, when associated with chromosomes. Widely expressed. Expressed in heart, brain, liver, placenta, lung, kidney and pancreas. Highly expressed in muscle.

The protein resides in the nucleus. Its subcellular location is the chromosome. The enzyme catalyses L-lysyl-[protein] + acetyl-CoA = N(6)-acetyl-L-lysyl-[protein] + CoA + H(+). Functionally, acetyltransferase required for the establishment of sister chromatid cohesion. Couples the processes of cohesion and DNA replication to ensure that only sister chromatids become paired together. In contrast to the structural cohesins, the deposition and establishment factors are required only during S phase. Acts by mediating the acetylation of cohesin component SMC3. This Homo sapiens (Human) protein is N-acetyltransferase ESCO1 (ESCO1).